We begin with the raw amino-acid sequence, 537 residues long: Tripeptidyl aminopeptidase (537 aa).

The first 36 residues, 1–36 (MRKSSIRRRATAFGTAGALVTATLIAGAVSAPAASA), serve as a signal peptide directing secretion. A propeptide spanning residues 37-39 (APA) is cleaved from the precursor. Residues 119–497 (GALIYNPGGP…SRLITERDAG (379 aa)) form the AB hydrolase-1 domain. The active-site Nucleophile is serine 245. Residue aspartate 470 is part of the active site. The active-site Proton donor is the histidine 499.

Belongs to the peptidase S33 family.

It localises to the secreted. Its function is as follows. Cleaves tripeptides from the N-termini of proteins. Does not cleave mono- or dipeptides, or N-terminally blocked peptides. The polypeptide is Tripeptidyl aminopeptidase (Streptomyces lividans).